The following is a 621-amino-acid chain: Lethal(3)malignant brain tumor-like protein 4 (621 aa).

Positions Met1–Thr48 are disordered. 2 stretches are compositionally biased toward basic and acidic residues: residues Leu10–Gln20 and Glu28–Ser44. 3 MBT repeats span residues Trp52–Pro152, Phe160–Pro260, and Phe269–Pro364. A CCHHC-type zinc finger spans residues Val370–Glu414. Residues Cys379, Cys384, His398, and Cys404 each contribute to the Zn(2+) site. Positions Trp543 to Ser607 constitute an SAM domain.

Its subcellular location is the nucleus. In terms of biological role, putative Polycomb group (PcG) protein. PcG proteins maintain the transcriptionally repressive state of genes, probably via a modification of chromatin, rendering it heritably changed in its expressibility. This Mus musculus (Mouse) protein is Lethal(3)malignant brain tumor-like protein 4 (L3mbtl4).